Reading from the N-terminus, the 725-residue chain is Ferric reduction oxidase 2 (725 aa).

The Cytoplasmic portion of the chain corresponds to 1–28; that stretch reads MEIEKSNNGGSNPSAGEEFKDMIKGVTK. A helical membrane pass occupies residues 29–48; sequence FLMMVIFLGTIMLWIMMPTL. Topologically, residues 49–74 are extracellular; sequence TYRTKWLPHLRIKFGTSTYFGATGTT. A helical transmembrane segment spans residues 75-93; the sequence is LFMYMFPMMVVACLGCVYL. At 94-125 the chain is on the cytoplasmic side; it reads HFKNRKSPHHIDRETKGGVWSKLRKPMLVKGP. A helical membrane pass occupies residues 126–149; the sequence is LGIVSVTEITFLAMFVALLLWCFI. Topologically, residues 150–217 are extracellular; sequence TYLRNSFATI…MGLTSESSIK (68 aa). One can recognise a Ferric oxidoreductase domain in the interval 183-303; the sequence is LGLIGNICLA…YLYIVFMLFF (121 aa). The helical transmembrane segment at 218–241 threads the bilayer; sequence YHIWLGHMVMALFTVHGLCYIIYW. Residues H219 and H233 each coordinate heme. The Cytoplasmic portion of the chain corresponds to 242–291; that stretch reads ASMHEISQMIMWDTKGVSNLAGEIALAAGLVMWATTYPKIRRRFFEVFFY. A helical membrane pass occupies residues 292 to 316; that stretch reads THYLYIVFMLFFVLHVGISFSFIAL. Heme is bound by residues H293 and H306. Topologically, residues 317 to 338 are extracellular; that stretch reads PGFYIFLVDRFLRFLQSRENVR. In terms of domain architecture, FAD-binding FR-type spans 332–437; the sequence is QSRENVRLLA…EGPYGPASAD (106 aa). A helical membrane pass occupies residues 339-359; sequence LLAARILPSDTMELTFSKNSK. Residues 360 to 554 are Cytoplasmic-facing; that stretch reads LVYSPTSIMF…SISSILGPNS (195 aa). 381–384 contacts FAD; sequence HPFT. NAD(+) is bound at residue 429–432; it reads GPYG. The chain crosses the membrane as a helical span at residues 555-577; that stretch reads WLWLGAILASSFLIFMIIIGIIT. The Extracellular segment spans residues 578 to 597; sequence RYYIYPIDHNTNKIYSLTSK. The helical transmembrane segment at 598-619 threads the bilayer; it reads TIIYILVISVSIMATCSAAMLW. Residues 620–725 lie on the Cytoplasmic side of the membrane; the sequence is NKKKYGKVES…LHFESISFSW (106 aa).

The protein belongs to the ferric reductase (FRE) family. The cofactor is FAD. Expressed in the epidermal cells of the roots. High expression in lateral roots and root hairs. Detected in leaves, stems, siliques and in flowers in anthers and styles.

It is found in the cell membrane. It carries out the reaction 2 a Fe(II)-siderophore + NAD(+) + H(+) = 2 a Fe(III)-siderophore + NADH. Flavocytochrome that transfers electrons across the plasma membrane to reduce ferric iron chelates to form soluble ferrous iron in the rhizosphere. May be involved in the delivery of iron to developing pollen grains. Also acts as a copper-chelate reductase. Involved in glycine betaine-mediated chilling tolerance and reactive oxygen species accumulation. The protein is Ferric reduction oxidase 2 (FRO2) of Arabidopsis thaliana (Mouse-ear cress).